The primary structure comprises 290 residues: Large ribosomal subunit protein uL3 (290 aa).

Gln152 carries the N5-methylglutamine modification. The interval 250–290 (ARLAEEQAAAEAESLAQAEAEIAAEGSDAAPEGDADKKDGE) is disordered. Positions 255–274 (EQAAAEAESLAQAEAEIAAE) are enriched in low complexity.

Belongs to the universal ribosomal protein uL3 family. Part of the 50S ribosomal subunit. Forms a cluster with proteins L14 and L19. In terms of processing, methylated by PrmB.

Its function is as follows. One of the primary rRNA binding proteins, it binds directly near the 3'-end of the 23S rRNA, where it nucleates assembly of the 50S subunit. The chain is Large ribosomal subunit protein uL3 from Jannaschia sp. (strain CCS1).